Here is a 277-residue protein sequence, read N- to C-terminus: UPF0276 protein PP_0992 (277 aa).

The protein belongs to the UPF0276 family.

This is UPF0276 protein PP_0992 from Pseudomonas putida (strain ATCC 47054 / DSM 6125 / CFBP 8728 / NCIMB 11950 / KT2440).